We begin with the raw amino-acid sequence, 91 residues long: Insertion element IS1 1 protein InsA (91 aa).

Belongs to the IS1 elements InsA family.

Its function is as follows. Absolutely required for transposition of IS1. The sequence is that of Insertion element IS1 1 protein InsA (insA1) from Escherichia coli (strain K12).